We begin with the raw amino-acid sequence, 169 residues long: Peptide deformylase (169 aa).

Fe cation-binding residues include cysteine 91 and histidine 133. Glutamate 134 is a catalytic residue. Histidine 137 is a Fe cation binding site.

It belongs to the polypeptide deformylase family. Fe(2+) serves as cofactor.

It carries out the reaction N-terminal N-formyl-L-methionyl-[peptide] + H2O = N-terminal L-methionyl-[peptide] + formate. Removes the formyl group from the N-terminal Met of newly synthesized proteins. Requires at least a dipeptide for an efficient rate of reaction. N-terminal L-methionine is a prerequisite for activity but the enzyme has broad specificity at other positions. The sequence is that of Peptide deformylase from Shigella boydii serotype 18 (strain CDC 3083-94 / BS512).